The primary structure comprises 206 residues: Small ribosomal subunit protein uS4 (206 aa).

Residues 96–156 enclose the S4 RNA-binding domain; it reads SRLDNVVYRM…EKSKNQLRIQ (61 aa).

Belongs to the universal ribosomal protein uS4 family. Part of the 30S ribosomal subunit. Contacts protein S5. The interaction surface between S4 and S5 is involved in control of translational fidelity.

Functionally, one of the primary rRNA binding proteins, it binds directly to 16S rRNA where it nucleates assembly of the body of the 30S subunit. With S5 and S12 plays an important role in translational accuracy. The chain is Small ribosomal subunit protein uS4 from Teredinibacter turnerae (strain ATCC 39867 / T7901).